The sequence spans 435 residues: Methanethiol oxidase (435 aa).

Positions 1 to 24 (MKKHLLAGACALAMGFAVIPGTFA) are cleaved as a signal peptide.

It belongs to the selenium-binding protein family. Homotetramer. Cu cation is required as a cofactor.

Its subcellular location is the periplasm. It carries out the reaction methanethiol + O2 + H2O = hydrogen sulfide + formaldehyde + H2O2 + H(+). Its pathway is organosulfur degradation. With respect to regulation, inhibited by EDTA but not by EGTA. Functionally, catalyzes the oxidation of methanethiol. Can also degrade ethanethiol, but not methanol, methylamine or dimethylsulfide. The chain is Methanethiol oxidase from Hyphomicrobium sp.